A 351-amino-acid polypeptide reads, in one-letter code: Geranylgeranyl pyrophosphate synthase (351 aa).

Lys55, Arg58, and Gln93 together coordinate isopentenyl diphosphate. Residues Asp100 and Asp104 each contribute to the Mg(2+) site. Arg109 lines the dimethylallyl diphosphate pocket. Arg110 provides a ligand contact to isopentenyl diphosphate. Lys196, Thr197, Gln236, Lys253, and Lys262 together coordinate dimethylallyl diphosphate.

Belongs to the FPP/GGPP synthase family. As to quaternary structure, interacts with fps1. Mg(2+) is required as a cofactor.

The protein localises to the cytoplasm. It localises to the nucleus. The catalysed reaction is isopentenyl diphosphate + dimethylallyl diphosphate = (2E)-geranyl diphosphate + diphosphate. The enzyme catalyses isopentenyl diphosphate + (2E)-geranyl diphosphate = (2E,6E)-farnesyl diphosphate + diphosphate. It carries out the reaction isopentenyl diphosphate + (2E,6E)-farnesyl diphosphate = (2E,6E,10E)-geranylgeranyl diphosphate + diphosphate. It functions in the pathway isoprenoid biosynthesis; farnesyl diphosphate biosynthesis; farnesyl diphosphate from geranyl diphosphate and isopentenyl diphosphate: step 1/1. Its pathway is isoprenoid biosynthesis; geranyl diphosphate biosynthesis; geranyl diphosphate from dimethylallyl diphosphate and isopentenyl diphosphate: step 1/1. It participates in isoprenoid biosynthesis; geranylgeranyl diphosphate biosynthesis; geranylgeranyl diphosphate from farnesyl diphosphate and isopentenyl diphosphate: step 1/1. Catalyzes the trans-addition of the 3 molecules of IPP onto DMAPP to form geranylgeranyl pyrophosphate. Required for the membrane attachment of ypt7 and rhb1. May be involved in vesicle trafficking and protein sorting. Required for forespore membrane formation. The chain is Geranylgeranyl pyrophosphate synthase (spo9) from Schizosaccharomyces pombe (strain 972 / ATCC 24843) (Fission yeast).